The following is a 510-amino-acid chain: NAD(P)H-quinone oxidoreductase subunit 2 B, chloroplastic (510 aa).

Helical transmembrane passes span 24–44, 57–77, 99–119, 124–144, 149–169, 183–203, 227–247, 295–315, 323–343, 354–374, 395–415, 418–438, and 484–504; these read LLLF…GLIL, IPWL…ALLF, IFQF…VEYI, MAIT…MFLC, LITI…LSGY, YLLM…WLYG, PGIS…LSLA, WHLL…LIAI, MLAY…IVGD, YMLF…LFGL, ALSL…AGFF, LHLF…IGLL, and MIVC…IIAI.

It belongs to the complex I subunit 2 family. NDH is composed of at least 16 different subunits, 5 of which are encoded in the nucleus.

Its subcellular location is the plastid. It is found in the chloroplast thylakoid membrane. The catalysed reaction is a plastoquinone + NADH + (n+1) H(+)(in) = a plastoquinol + NAD(+) + n H(+)(out). It carries out the reaction a plastoquinone + NADPH + (n+1) H(+)(in) = a plastoquinol + NADP(+) + n H(+)(out). Its function is as follows. NDH shuttles electrons from NAD(P)H:plastoquinone, via FMN and iron-sulfur (Fe-S) centers, to quinones in the photosynthetic chain and possibly in a chloroplast respiratory chain. The immediate electron acceptor for the enzyme in this species is believed to be plastoquinone. Couples the redox reaction to proton translocation, and thus conserves the redox energy in a proton gradient. This is NAD(P)H-quinone oxidoreductase subunit 2 B, chloroplastic from Citrus sinensis (Sweet orange).